We begin with the raw amino-acid sequence, 137 residues long: Molluscan insulin-related peptide 2 (137 aa).

The signal sequence occupies residues 1–31 (MVGVRLVFTNAFVVTVLLTLLLDVVVKPAEG). Q32 bears the Pyrrolidone carboxylic acid mark. Cystine bridges form between C47-C123, C59-C136, and C122-C127. Residues 71-83 (DAETGWLLPETMV) constitute a propeptide, C-beta peptide like. The propeptide at 86–110 (NAETDLDDPLRNIKLSSESALTYLT) is C-alpha peptide like. Q113 is subject to Pyrrolidone carboxylic acid.

The protein belongs to the insulin family. In terms of assembly, heterodimer of a B chain and an A chain linked by two disulfide bonds. As to expression, expressed in the cerebral light-green cells which are giant neuroendocrines cells involved in the control of growth.

Its subcellular location is the cytoplasmic vesicle. It localises to the secretory vesicle. This Lymnaea stagnalis (Great pond snail) protein is Molluscan insulin-related peptide 2.